We begin with the raw amino-acid sequence, 150 residues long: Ubiquitin-conjugating enzyme E2 3 (150 aa).

One can recognise a UBC core domain in the interval 4–150 (PAKKRLMWDF…VIEIVEQSYV (147 aa)). Cys88 serves as the catalytic Glycyl thioester intermediate.

It belongs to the ubiquitin-conjugating enzyme family. In terms of tissue distribution, expressed in all tissues examined. Lower levels found in leaves.

It catalyses the reaction S-ubiquitinyl-[E1 ubiquitin-activating enzyme]-L-cysteine + [E2 ubiquitin-conjugating enzyme]-L-cysteine = [E1 ubiquitin-activating enzyme]-L-cysteine + S-ubiquitinyl-[E2 ubiquitin-conjugating enzyme]-L-cysteine.. It functions in the pathway protein modification; protein ubiquitination. Accepts the ubiquitin from the E1 complex and catalyzes its covalent attachment to other proteins. In Arabidopsis thaliana (Mouse-ear cress), this protein is Ubiquitin-conjugating enzyme E2 3 (UBC3).